The chain runs to 211 residues: Ribosomal RNA small subunit methyltransferase G (211 aa).

Residues Gly-76, Leu-81, 127–128 (VE), and Arg-142 each bind S-adenosyl-L-methionine.

It belongs to the methyltransferase superfamily. RNA methyltransferase RsmG family.

The protein resides in the cytoplasm. The catalysed reaction is guanosine(527) in 16S rRNA + S-adenosyl-L-methionine = N(7)-methylguanosine(527) in 16S rRNA + S-adenosyl-L-homocysteine. Functionally, specifically methylates the N7 position of guanine in position 527 of 16S rRNA. This Vibrio vulnificus (strain CMCP6) protein is Ribosomal RNA small subunit methyltransferase G.